We begin with the raw amino-acid sequence, 546 residues long: Sulfite oxidase, mitochondrial (546 aa).

A mitochondrion-targeting transit peptide spans 1–80; that stretch reads MLPRLYRSVA…YHDHRCRASQ (80 aa). The Cytochrome b5 heme-binding domain maps to 83 to 162; that stretch reads PRIYSKEDVR…LAEYKIGELN (80 aa). Residue His-119 participates in heme b binding. Residue Ser-124 is modified to Phosphoserine. Residues His-144, Gln-146, and His-148 each contribute to the heme b site. Positions 166 to 175 are hinge; that stretch reads RMSPPLEASD. Residues 176 to 402 are moco domain; it reads PYSNDPMRHP…YSHWQRRDYK (227 aa). Mo-molybdopterin-binding positions include 216-220, Cys-265, Asp-323, His-362, Arg-367, and 378-380; these read FTRNH and HVK. The interval 403-539 is homodimerization; the sequence is GFSPSVDWDT…RGVLSNAWHR (137 aa).

As to quaternary structure, homodimer. The cofactor is heme b. It depends on Mo-molybdopterin as a cofactor.

It localises to the mitochondrion intermembrane space. The catalysed reaction is sulfite + O2 + H2O = sulfate + H2O2. Its pathway is energy metabolism; sulfur metabolism. Catalyzes the oxidation of sulfite to sulfate, the terminal reaction in the oxidative degradation of sulfur-containing amino acids. This chain is Sulfite oxidase, mitochondrial, found in Rattus norvegicus (Rat).